A 139-amino-acid chain; its full sequence is Early placenta insulin-like peptide (139 aa).

The N-terminal stretch at 1–25 is a signal peptide; the sequence is MASLFRSYLPAIWLLLSQLLRESLA. Disulfide bonds link Cys31–Cys125, Cys43–Cys138, and Cys124–Cys129. Residues 59–114 constitute a propeptide, c peptide; the sequence is LESGRPKEMVSTSNNKDGQALGTTSEFIPNLSPELKKPLSEGQPSLKKIILSRKKR.

The protein belongs to the insulin family. As to expression, expressed in placenta, uterus and in fetal perichondrium. Expression levels were increased in both early placentas and molar pregnancies and were reduced in choriocarcinoma cells.

It localises to the secreted. In terms of biological role, may play an important role in trophoblast development and in the regulation of bone formation. This Homo sapiens (Human) protein is Early placenta insulin-like peptide (INSL4).